The following is a 215-amino-acid chain: UPF0502 protein Gbem_0102 (215 aa).

The protein belongs to the UPF0502 family.

This Citrifermentans bemidjiense (strain ATCC BAA-1014 / DSM 16622 / JCM 12645 / Bem) (Geobacter bemidjiensis) protein is UPF0502 protein Gbem_0102.